Consider the following 205-residue polypeptide: Beta-crystallin B2 (205 aa).

Ala2 is modified (N-acetylalanine). Positions 2–16 (ASDHQSPATKQQQPS) are N-terminal arm. 2 Beta/gamma crystallin 'Greek key' domains span residues 17–56 (SKIV…LVHS) and 57–101 (GPWV…RPIK). Positions 102 to 106 (VDSQE) are connecting peptide. Beta/gamma crystallin 'Greek key' domains lie at 107–148 (HKIV…RVQS) and 149–191 (GTWV…RRIR). The C-terminal arm stretch occupies residues 193–205 (MQWHQRGTFHPTN).

The protein belongs to the beta/gamma-crystallin family. As to quaternary structure, homo/heterodimer, or complexes of higher-order. The structure of beta-crystallin oligomers seems to be stabilized through interactions between the N-terminal arms. Post-translationally, the N-terminus is blocked.

Functionally, crystallins are the dominant structural components of the vertebrate eye lens. This Aquarana catesbeiana (American bullfrog) protein is Beta-crystallin B2.